A 74-amino-acid polypeptide reads, in one-letter code: uncharacterized protein (74 aa).

Residues 7–26 (IHLYVMASAMSSSPIFFFFQ) form a helical membrane-spanning segment.

The protein resides in the membrane. This is an uncharacterized protein from Homo sapiens (Human).